The following is a 143-amino-acid chain: Large-conductance mechanosensitive channel (143 aa).

2 consecutive transmembrane segments (helical) span residues 16–36 (VIDLAVGVVIGAAFGKIVTAL) and 84–104 (INTVVQFLIIAFAIFLVVKLI).

Belongs to the MscL family. In terms of assembly, homopentamer.

The protein localises to the cell inner membrane. Its function is as follows. Channel that opens in response to stretch forces in the membrane lipid bilayer. May participate in the regulation of osmotic pressure changes within the cell. This Xanthomonas axonopodis pv. citri (strain 306) protein is Large-conductance mechanosensitive channel.